The primary structure comprises 329 residues: Formimidoylglutamase (329 aa).

Mn(2+) is bound by residues histidine 133, aspartate 159, histidine 161, aspartate 163, aspartate 253, and aspartate 255.

This sequence belongs to the arginase family. Requires Mn(2+) as cofactor.

The catalysed reaction is N-formimidoyl-L-glutamate + H2O = formamide + L-glutamate. It functions in the pathway amino-acid degradation; L-histidine degradation into L-glutamate; L-glutamate from N-formimidoyl-L-glutamate (hydrolase route): step 1/1. Functionally, catalyzes the conversion of N-formimidoyl-L-glutamate to L-glutamate and formamide. The polypeptide is Formimidoylglutamase (Streptococcus gordonii (strain Challis / ATCC 35105 / BCRC 15272 / CH1 / DL1 / V288)).